The chain runs to 94 residues: Pyrimidine/purine nucleoside phosphorylase (94 aa).

Belongs to the nucleoside phosphorylase PpnP family.

The enzyme catalyses a purine D-ribonucleoside + phosphate = a purine nucleobase + alpha-D-ribose 1-phosphate. It carries out the reaction adenosine + phosphate = alpha-D-ribose 1-phosphate + adenine. The catalysed reaction is cytidine + phosphate = cytosine + alpha-D-ribose 1-phosphate. It catalyses the reaction guanosine + phosphate = alpha-D-ribose 1-phosphate + guanine. The enzyme catalyses inosine + phosphate = alpha-D-ribose 1-phosphate + hypoxanthine. It carries out the reaction thymidine + phosphate = 2-deoxy-alpha-D-ribose 1-phosphate + thymine. The catalysed reaction is uridine + phosphate = alpha-D-ribose 1-phosphate + uracil. It catalyses the reaction xanthosine + phosphate = alpha-D-ribose 1-phosphate + xanthine. Its function is as follows. Catalyzes the phosphorolysis of diverse nucleosides, yielding D-ribose 1-phosphate and the respective free bases. Can use uridine, adenosine, guanosine, cytidine, thymidine, inosine and xanthosine as substrates. Also catalyzes the reverse reactions. This is Pyrimidine/purine nucleoside phosphorylase from Alcanivorax borkumensis (strain ATCC 700651 / DSM 11573 / NCIMB 13689 / SK2).